Here is a 155-residue protein sequence, read N- to C-terminus: Small ribosomal subunit protein uS7c (155 aa).

The protein belongs to the universal ribosomal protein uS7 family. As to quaternary structure, part of the 30S ribosomal subunit.

Its subcellular location is the plastid. The protein localises to the chloroplast. Its function is as follows. One of the primary rRNA binding proteins, it binds directly to 16S rRNA where it nucleates assembly of the head domain of the 30S subunit. This is Small ribosomal subunit protein uS7c (rps7) from Coelogyne cristata (Orchid).